The primary structure comprises 340 residues: DNA-directed RNA polymerase subunit alpha (340 aa).

The alpha N-terminal domain (alpha-NTD) stretch occupies residues 1-233 (MYRNWRDLIS…EQLSIFINFD (233 aa)). An alpha C-terminal domain (alpha-CTD) region spans residues 251–340 (INENLYRSVD…RLRGERKDEE (90 aa)).

Belongs to the RNA polymerase alpha chain family. Homodimer. The RNAP catalytic core consists of 2 alpha, 1 beta, 1 beta' and 1 omega subunit. When a sigma factor is associated with the core the holoenzyme is formed, which can initiate transcription.

It catalyses the reaction RNA(n) + a ribonucleoside 5'-triphosphate = RNA(n+1) + diphosphate. Its function is as follows. DNA-dependent RNA polymerase catalyzes the transcription of DNA into RNA using the four ribonucleoside triphosphates as substrates. The chain is DNA-directed RNA polymerase subunit alpha from Geobacter sulfurreducens (strain ATCC 51573 / DSM 12127 / PCA).